A 258-amino-acid polypeptide reads, in one-letter code: Ribonuclease PH (258 aa).

Phosphate contacts are provided by residues arginine 88 and 126 to 128 (GTR).

It belongs to the RNase PH family. Homohexameric ring arranged as a trimer of dimers.

It carries out the reaction tRNA(n+1) + phosphate = tRNA(n) + a ribonucleoside 5'-diphosphate. In terms of biological role, phosphorolytic 3'-5' exoribonuclease that plays an important role in tRNA 3'-end maturation. Removes nucleotide residues following the 3'-CCA terminus of tRNAs; can also add nucleotides to the ends of RNA molecules by using nucleoside diphosphates as substrates, but this may not be physiologically important. Probably plays a role in initiation of 16S rRNA degradation (leading to ribosome degradation) during starvation. This Mycobacteroides abscessus (strain ATCC 19977 / DSM 44196 / CCUG 20993 / CIP 104536 / JCM 13569 / NCTC 13031 / TMC 1543 / L948) (Mycobacterium abscessus) protein is Ribonuclease PH.